The primary structure comprises 543 residues: Ribonuclease Y (543 aa).

Residues 4–24 (IIMIPVATAIVSLLVGTVIGY) form a helical membrane-spanning segment. The KH domain maps to 233 to 296 (TVSVVDLPNE…EIAKRAMERL (64 aa)). The 94-residue stretch at 359–452 (VLSHSIEVGK…VVAADTISSA (94 aa)) folds into the HD domain.

It belongs to the RNase Y family.

It localises to the cell membrane. In terms of biological role, endoribonuclease that initiates mRNA decay. This Lactobacillus helveticus (strain DPC 4571) protein is Ribonuclease Y.